Here is a 669-residue protein sequence, read N- to C-terminus: Epithelial sodium channel subunit gamma (669 aa).

At 1–67 (MAPPYHGDTR…VVSRGRLRKF (67 aa)) the chain is on the cytoplasmic side. A helical membrane pass occupies residues 68-88 (IWILLTLSAVGLILWQCAELI). Residues 89-551 (MSYYTASVSV…VILLSNFGGQ (463 aa)) lie on the Extracellular side of the membrane. 8 disulfide bridges follow: cysteine 113-cysteine 300, cysteine 223-cysteine 231, cysteine 277-cysteine 284, cysteine 389-cysteine 474, cysteine 411-cysteine 470, cysteine 415-cysteine 466, cysteine 424-cysteine 451, and cysteine 426-cysteine 440. A helical transmembrane segment spans residues 552–572 (LGLWMSCSMVCVIEIIEVFFI). The Cytoplasmic segment spans residues 573–669 (DSFSIVMRRR…LPDTLEGRSH (97 aa)). The disordered stretch occupies residues 592–619 (DRKAPRPQEPPQVNAPAKEGHDNPVCTD).

The protein belongs to the amiloride-sensitive sodium channel (TC 1.A.6) family. SCNN1G subfamily. In terms of assembly, component of the heterotrimeric epithelial sodium channel (ENaC) composed of an alpha/SCNN1A, a beta/SCNN1B and a gamma/SCNN1G subunit.

The protein localises to the apical cell membrane. It carries out the reaction Na(+)(in) = Na(+)(out). Originally identified and characterized by its inhibition by the diuretic drug amiloride. Its function is as follows. This is one of the three pore-forming subunits of the heterotrimeric epithelial sodium channel (ENaC), a critical regulator of sodium balance and fluid homeostasis. ENaC operates in epithelial tissues, where it mediates the electrodiffusion of sodium ions from extracellular fluid through the apical membrane of cells, with water following osmotically. This chain is Epithelial sodium channel subunit gamma, found in Pelodiscus sinensis (Chinese softshell turtle).